The sequence spans 236 residues: Thrombin-like enzyme kangshuanmei (236 aa).

Residues 1 to 227 (VIGGDECNIN…HLDWIQSIIA (227 aa)) form the Peptidase S1 domain. Disulfide bonds link Cys7/Cys141, Cys28/Cys44, Cys78/Cys234, Cys120/Cys188, Cys152/Cys167, and Cys178/Cys203. The active-site Charge relay system is His43. Residue Asn81 is glycosylated (N-linked (GlcNAc...) asparagine). Asp88 (charge relay system) is an active-site residue. Asn99 and Asn148 each carry an N-linked (GlcNAc...) asparagine glycan. Ser182 (charge relay system) is an active-site residue. N-linked (GlcNAc...) asparagine glycosylation is present at Asn229.

The protein belongs to the peptidase S1 family. Snake venom subfamily. As to quaternary structure, monomer. N-glycosylated by units composed of Fuc, Man, GlcNAc, Gal and NeuAC residues. In terms of tissue distribution, expressed by the venom gland.

It is found in the secreted. Inhibited by 4-(2-aminoethyl)-benzensulfonyl fluoride. Not inhibited by antithrombin-III. Functionally, thrombin-like snake venom serine protease. Cleaves bonds after Arg and Lys, converts fibrinogen (FGA and FGB) to fibrin and releases both fibrinopeptides A and B, and fibrinogen peptide Bbeta1-42. Has a blood clotting activity. This chain is Thrombin-like enzyme kangshuanmei, found in Gloydius brevicauda (Korean slamosa snake).